Reading from the N-terminus, the 829-residue chain is Probable beta-glucosidase H (829 aa).

The active site involves D225. In terms of domain architecture, PA14 spans 389–548; that stretch reads RMLSNAVIRF…DPEQMVRDAV (160 aa). N-linked (GlcNAc...) asparagine glycosylation is found at N416, N431, N473, N602, and N627.

Belongs to the glycosyl hydrolase 3 family.

The protein resides in the secreted. The enzyme catalyses Hydrolysis of terminal, non-reducing beta-D-glucosyl residues with release of beta-D-glucose.. It participates in glycan metabolism; cellulose degradation. Functionally, beta-glucosidases are one of a number of cellulolytic enzymes involved in the degradation of cellulosic biomass. Catalyzes the last step releasing glucose from the inhibitory cellobiose. The protein is Probable beta-glucosidase H (bglH) of Aspergillus clavatus (strain ATCC 1007 / CBS 513.65 / DSM 816 / NCTC 3887 / NRRL 1 / QM 1276 / 107).